The sequence spans 20 residues: Cytochrome c oxidase subunit 8B, mitochondrial (20 aa).

The protein belongs to the cytochrome c oxidase VIII family. As to quaternary structure, component of the cytochrome c oxidase (complex IV, CIV), a multisubunit enzyme composed of 14 subunits. The complex is composed of a catalytic core of 3 subunits MT-CO1, MT-CO2 and MT-CO3, encoded in the mitochondrial DNA, and 11 supernumerary subunits COX4I, COX5A, COX5B, COX6A, COX6B, COX6C, COX7A, COX7B, COX7C, COX8 and NDUFA4, which are encoded in the nuclear genome. The complex exists as a monomer or a dimer and forms supercomplexes (SCs) in the inner mitochondrial membrane with NADH-ubiquinone oxidoreductase (complex I, CI) and ubiquinol-cytochrome c oxidoreductase (cytochrome b-c1 complex, complex III, CIII), resulting in different assemblies (supercomplex SCI(1)III(2)IV(1) and megacomplex MCI(2)III(2)IV(2)).

Its subcellular location is the mitochondrion inner membrane. It participates in energy metabolism; oxidative phosphorylation. Its function is as follows. Component of the cytochrome c oxidase, the last enzyme in the mitochondrial electron transport chain which drives oxidative phosphorylation. The respiratory chain contains 3 multisubunit complexes succinate dehydrogenase (complex II, CII), ubiquinol-cytochrome c oxidoreductase (cytochrome b-c1 complex, complex III, CIII) and cytochrome c oxidase (complex IV, CIV), that cooperate to transfer electrons derived from NADH and succinate to molecular oxygen, creating an electrochemical gradient over the inner membrane that drives transmembrane transport and the ATP synthase. Cytochrome c oxidase is the component of the respiratory chain that catalyzes the reduction of oxygen to water. Electrons originating from reduced cytochrome c in the intermembrane space (IMS) are transferred via the dinuclear copper A center (CU(A)) of subunit 2 and heme A of subunit 1 to the active site in subunit 1, a binuclear center (BNC) formed by heme A3 and copper B (CU(B)). The BNC reduces molecular oxygen to 2 water molecules using 4 electrons from cytochrome c in the IMS and 4 protons from the mitochondrial matrix. The sequence is that of Cytochrome c oxidase subunit 8B, mitochondrial from Thunnus obesus (Bigeye tuna).